Here is a 440-residue protein sequence, read N- to C-terminus: Tubby-like F-box protein 13 (440 aa).

The F-box domain maps to 51 to 106; sequence SCWASLPPELLRDIIERLEESEATWPSRKHVVACAGVCRTWREMCKEIVKNPELCG.

This sequence belongs to the TUB family. Ubiquitous.

In Oryza sativa subsp. japonica (Rice), this protein is Tubby-like F-box protein 13 (TULP13).